Here is a 58-residue protein sequence, read N- to C-terminus: Large ribosomal subunit protein uL30 (58 aa).

Belongs to the universal ribosomal protein uL30 family. As to quaternary structure, part of the 50S ribosomal subunit.

This chain is Large ribosomal subunit protein uL30, found in Phocaeicola vulgatus (strain ATCC 8482 / DSM 1447 / JCM 5826 / CCUG 4940 / NBRC 14291 / NCTC 11154) (Bacteroides vulgatus).